The primary structure comprises 234 residues: Leucyl/phenylalanyl-tRNA--protein transferase (234 aa).

Belongs to the L/F-transferase family.

The protein localises to the cytoplasm. It carries out the reaction N-terminal L-lysyl-[protein] + L-leucyl-tRNA(Leu) = N-terminal L-leucyl-L-lysyl-[protein] + tRNA(Leu) + H(+). The enzyme catalyses N-terminal L-arginyl-[protein] + L-leucyl-tRNA(Leu) = N-terminal L-leucyl-L-arginyl-[protein] + tRNA(Leu) + H(+). The catalysed reaction is L-phenylalanyl-tRNA(Phe) + an N-terminal L-alpha-aminoacyl-[protein] = an N-terminal L-phenylalanyl-L-alpha-aminoacyl-[protein] + tRNA(Phe). Functions in the N-end rule pathway of protein degradation where it conjugates Leu, Phe and, less efficiently, Met from aminoacyl-tRNAs to the N-termini of proteins containing an N-terminal arginine or lysine. In Myxococcus xanthus (strain DK1622), this protein is Leucyl/phenylalanyl-tRNA--protein transferase.